A 362-amino-acid chain; its full sequence is Peptide chain release factor 1 (362 aa).

Q240 is modified (N5-methylglutamine).

It belongs to the prokaryotic/mitochondrial release factor family. Post-translationally, methylated by PrmC. Methylation increases the termination efficiency of RF1.

Its subcellular location is the cytoplasm. In terms of biological role, peptide chain release factor 1 directs the termination of translation in response to the peptide chain termination codons UAG and UAA. This chain is Peptide chain release factor 1, found in Bifidobacterium longum (strain DJO10A).